Consider the following 147-residue polypeptide: Cilia- and flagella-associated protein 90 (147 aa).

A disordered region spans residues M1–L36.

As to quaternary structure, microtubule inner protein component of sperm flagellar doublet microtubules.

It localises to the cytoplasm. The protein resides in the cytoskeleton. Its subcellular location is the cilium axoneme. It is found in the flagellum axoneme. Functionally, microtubule inner protein (MIP) part of the dynein-decorated doublet microtubules (DMTs) in cilia axoneme, which is required for motile cilia beating. The chain is Cilia- and flagella-associated protein 90 from Homo sapiens (Human).